A 320-amino-acid polypeptide reads, in one-letter code: Probable arabinan endo-1,5-alpha-L-arabinosidase C (320 aa).

The N-terminal stretch at 1–16 is a signal peptide; that stretch reads MYRSTLLFLFIALVNA. Aspartate 31 acts as the Proton acceptor in catalysis. 3 N-linked (GlcNAc...) asparagine glycosylation sites follow: asparagine 73, asparagine 137, and asparagine 191. The active-site Proton donor is the glutamate 199.

The protein belongs to the glycosyl hydrolase 43 family.

The protein resides in the secreted. The catalysed reaction is Endohydrolysis of (1-&gt;5)-alpha-arabinofuranosidic linkages in (1-&gt;5)-arabinans.. It participates in glycan metabolism; L-arabinan degradation. Functionally, endo-1,5-alpha-L-arabinanase involved in degradation of pectin. Its preferred substrate is linear 1,5-alpha-L-arabinan. This chain is Probable arabinan endo-1,5-alpha-L-arabinosidase C (abnC), found in Aspergillus terreus (strain NIH 2624 / FGSC A1156).